The following is a 167-amino-acid chain: Phospholipase A2 heteromtoxin (167 aa).

The Ca(2+) site is built by W38, G40, and G42. 5 disulfide bridges follow: C39–C61, C60–C99, C67–C92, C90–C127, and C132–C144. H64 is an active-site residue. D65 serves as a coordination point for Ca(2+). Residues 136–140 (GRSAR) constitute a propeptide that is removed on maturation.

It belongs to the phospholipase A2 family. Group III subfamily. In terms of assembly, heterodimer composed of a large and a small subunits; disulfide-linked. Ca(2+) is required as a cofactor. In terms of tissue distribution, expressed by the venom gland.

It localises to the secreted. It carries out the reaction a 1,2-diacyl-sn-glycero-3-phosphocholine + H2O = a 1-acyl-sn-glycero-3-phosphocholine + a fatty acid + H(+). Phospholipase toxin, which catalyzes the calcium-dependent hydrolysis of the 2-acyl groups in 3-sn-phosphoglycerides. Inhibits both skeletal (RYR1) and cardiac (RYR2) ryanodine receptors (calcium release channels). Probably blocks ryanodine receptors by generating a lipid product. The protein is Phospholipase A2 heteromtoxin of Heterometrus laoticus (Thai giant scorpion).